The chain runs to 372 residues: Signal peptide peptidase-like 1 (372 aa).

Topologically, residues 1–6 (METLWT) are lumenal. Residues 7–27 (LLYLLEPAPATLIVTAVTVTF) traverse the membrane as a helical segment. Topologically, residues 28–54 (ASAFRALNYGKEMERNRDFSEASITLD) are cytoplasmic. Residues 55 to 77 (SSQALMIPVMSSCSLLLMFYLFS) form a helical membrane-spanning segment. Residues 78-81 (SVSQ) are Lumenal-facing. Residues 82–104 (LLTAFTAIASVSSLFYWLSPYAV) form a helical membrane-spanning segment. The Cytoplasmic segment spans residues 105–123 (YMKTQLGLSDPFLSRCCSK). A helical transmembrane segment spans residues 124–146 (SFTRIQGLLLVACAMTVVAWLIS). At 147–149 (GHW) the chain is on the lumenal side. Residues 150-167 (VLNNLLGISICIAFVSHV) traverse the membrane as a helical segment. Residues 168-171 (RLPN) are Cytoplasmic-facing. A helical transmembrane segment spans residues 172-192 (IKICAMLLVCLFVYDIFWVFF). D186 is a catalytic residue. Residues 193-257 (SERFFGANVM…GVVPGVSASD (65 aa)) are Lumenal-facing. The helical transmembrane segment at 258-278 (FMMLGLGDMAIPAMLLALVLC) threads the bilayer. D265 is a catalytic residue. Over 279–301 (FDHRKTRDVVNIFDLKSSKGHKY) the chain is Cytoplasmic. A helical membrane pass occupies residues 302-322 (IWYALPGYAIGLVAALAAGVL). At 323 to 325 (THS) the chain is on the lumenal side. Residues 326–346 (PQPALLYLVPSTLGPVIFMSW) form a helical membrane-spanning segment. The PAL motif lies at 328–330 (PAL). Over 347–372 (RRKDLAELWEGPALSNPIEKSHEIEI) the chain is Cytoplasmic.

The protein belongs to the peptidase A22B family. Ubiquitous.

It is found in the endosome membrane. Intramembrane-cleaving aspartic protease (I-CLiP) that cleaves type II membrane signal peptides in the hydrophobic plane of the membrane. This is Signal peptide peptidase-like 1 (SPPL1) from Arabidopsis thaliana (Mouse-ear cress).